The chain runs to 350 residues: Histidinol-phosphate aminotransferase (350 aa).

Lysine 207 carries the N6-(pyridoxal phosphate)lysine modification.

It belongs to the class-II pyridoxal-phosphate-dependent aminotransferase family. Histidinol-phosphate aminotransferase subfamily. Homodimer. Pyridoxal 5'-phosphate serves as cofactor.

It catalyses the reaction L-histidinol phosphate + 2-oxoglutarate = 3-(imidazol-4-yl)-2-oxopropyl phosphate + L-glutamate. It functions in the pathway amino-acid biosynthesis; L-histidine biosynthesis; L-histidine from 5-phospho-alpha-D-ribose 1-diphosphate: step 7/9. This chain is Histidinol-phosphate aminotransferase, found in Streptococcus thermophilus (strain ATCC BAA-491 / LMD-9).